The primary structure comprises 959 residues: DNA translocase FtsK 1 (959 aa).

Helical transmembrane passes span 1 to 21, 39 to 59, and 83 to 103; these read MGLGWFGISSVWLLPMVWRYV, IWLATLAVLCASASLEALTSG, and GWTGAFLLMLGVLLWVAPMVF. Residues 104–959 lie on the Cytoplasmic side of the membrane; sequence GHSWRQLLAR…REVIAPGGGD (856 aa). Residues 122–427 form a disordered region; that stretch reads PVQADARHDE…AAPPPPAVPA (306 aa). The span at 126–136 shows a compositional bias: basic and acidic residues; it reads DARHDEADDGL. Composition is skewed to low complexity over residues 220 to 229 and 264 to 286; these read ATPKAATQAP and APSAPVEDAAPAISPAAEPDAPA. Positions 287–298 are enriched in pro residues; that stretch reads SAPPEPAEPSPP. The span at 333–379 shows a compositional bias: acidic residues; it reads PEPEPEPEAETEVTPEAEAEPEAEPEAEAEPEAEAEAEAEAEAEPEA. Low complexity predominate over residues 380 to 403; sequence EAPAPESVAPALQEAEAATAAEAP. A FtsK domain is found at 605–814; that stretch reads GNPVVTDLAR…FQVSSKIDSR (210 aa). 625 to 630 lines the ATP pocket; it reads GSGKSV.

Belongs to the FtsK/SpoIIIE/SftA family. Homohexamer. Forms a ring that surrounds DNA.

Its subcellular location is the cell inner membrane. In terms of biological role, essential cell division protein that coordinates cell division and chromosome segregation. The N-terminus is involved in assembly of the cell-division machinery. The C-terminus functions as a DNA motor that moves dsDNA in an ATP-dependent manner towards the dif recombination site, which is located within the replication terminus region. Translocation stops specifically at Xer-dif sites, where FtsK interacts with the Xer recombinase, allowing activation of chromosome unlinking by recombination. FtsK orienting polar sequences (KOPS) guide the direction of DNA translocation. FtsK can remove proteins from DNA as it translocates, but translocation stops specifically at XerCD-dif site, thereby preventing removal of XerC and XerD from dif. The protein is DNA translocase FtsK 1 (ftsK1) of Ralstonia nicotianae (strain ATCC BAA-1114 / GMI1000) (Ralstonia solanacearum).